Consider the following 308-residue polypeptide: D-alanine--D-alanine ligase B (308 aa).

The 201-residue stretch at 102 to 302 (KKIVKTVGVP…FGELLSWMVE (201 aa)) folds into the ATP-grasp domain. ATP is bound at residue 128 to 183 (PMKPPYVIKPVNEGSSFGVVIVSEGQSHPPQVVGSSEWKYGDTVMVERYIHGRELT). Mg(2+) contacts are provided by aspartate 252, glutamate 269, and asparagine 271.

This sequence belongs to the D-alanine--D-alanine ligase family. The cofactor is Mg(2+). Requires Mn(2+) as cofactor.

The protein localises to the cytoplasm. The enzyme catalyses 2 D-alanine + ATP = D-alanyl-D-alanine + ADP + phosphate + H(+). Its pathway is cell wall biogenesis; peptidoglycan biosynthesis. Functionally, cell wall formation. The protein is D-alanine--D-alanine ligase B of Mesorhizobium japonicum (strain LMG 29417 / CECT 9101 / MAFF 303099) (Mesorhizobium loti (strain MAFF 303099)).